The sequence spans 218 residues: Ribose-5-phosphate isomerase A (218 aa).

Substrate is bound by residues 28-31 (TGST), 81-84 (DGAD), and 94-97 (KGGG). The active-site Proton acceptor is glutamate 103. A substrate-binding site is contributed by lysine 121.

The protein belongs to the ribose 5-phosphate isomerase family. Homodimer.

It catalyses the reaction aldehydo-D-ribose 5-phosphate = D-ribulose 5-phosphate. The protein operates within carbohydrate degradation; pentose phosphate pathway; D-ribose 5-phosphate from D-ribulose 5-phosphate (non-oxidative stage): step 1/1. Its function is as follows. Catalyzes the reversible conversion of ribose-5-phosphate to ribulose 5-phosphate. This Pseudoalteromonas atlantica (strain T6c / ATCC BAA-1087) protein is Ribose-5-phosphate isomerase A.